A 224-amino-acid polypeptide reads, in one-letter code: Cardosin-E (224 aa).

One can recognise a Peptidase A1 domain in the interval 1 to 221 (DSGSAIVALT…DYGNLLVGFA (221 aa)). Residue aspartate 35 is part of the active site. Residues cysteine 125 and cysteine 129 are joined by a disulfide bond. Residue aspartate 134 is part of the active site.

This sequence belongs to the peptidase A1 family. In terms of assembly, heterodimer of a light chain and a heavy chain. An intermediate form is produced first, and undergoes proteolytic processing to remove the internal plant-specific insert (PSI) and the propeptide. N-glycosylated. In terms of tissue distribution, pistils.

The protein resides in the microsome membrane. It is found in the protein storage vacuole. The protein localises to the secreted. It localises to the cell wall. Its subcellular location is the extracellular space. The protein resides in the extracellular matrix. With respect to regulation, inhibited by pepstatin. Aspartic protease with a high preference for bonds between hydrophobic residues. The sequence is that of Cardosin-E from Cynara cardunculus (Cardoon).